The following is a 232-amino-acid chain: 7-cyano-7-deazaguanine synthase (232 aa).

An ATP-binding site is contributed by 8–18 (FSGGQDSTTCL). 4 residues coordinate Zn(2+): cysteine 189, cysteine 198, cysteine 201, and cysteine 204.

It belongs to the QueC family. Zn(2+) serves as cofactor.

It catalyses the reaction 7-carboxy-7-deazaguanine + NH4(+) + ATP = 7-cyano-7-deazaguanine + ADP + phosphate + H2O + H(+). Its pathway is purine metabolism; 7-cyano-7-deazaguanine biosynthesis. In terms of biological role, catalyzes the ATP-dependent conversion of 7-carboxy-7-deazaguanine (CDG) to 7-cyano-7-deazaguanine (preQ(0)). The polypeptide is 7-cyano-7-deazaguanine synthase (Photorhabdus laumondii subsp. laumondii (strain DSM 15139 / CIP 105565 / TT01) (Photorhabdus luminescens subsp. laumondii)).